A 168-amino-acid chain; its full sequence is Small ribosomal subunit protein uS8 (168 aa).

The tract at residues Glu59 to Pro93 is not found in other S8 sequences.

This sequence belongs to the universal ribosomal protein uS8 family. As to quaternary structure, part of the 30S ribosomal subunit. Contacts proteins S5 and S12.

In terms of biological role, one of the primary rRNA binding proteins, it binds directly to 16S rRNA central domain where it helps coordinate assembly of the platform of the 30S subunit. This Aquifex pyrophilus protein is Small ribosomal subunit protein uS8.